The chain runs to 405 residues: MCSIGEDDFGDEGATHAMVAESLPTGIVISPGDCNKCGVVSSELYKLNFRVAECRDCFLNHARHKFRASLGAAKVLPRNAEVLLAVDGSAESLVLLDMLHFAQTQNTFRRLHCNARVVYIDDQSVHGGESMNLQALQALGTRYEPLEFYVVELGASACSLQRLGQYSTSLKEPNGLNTKLEKLRSLTARQDYHQQQRKNLLASVAQKLSCSHVFEPSVSGDLAAQLLTSITLGRGGSAALDVALLDDRLAAGVKLLRPLRDLNEQEVRFYVHACQLKPLRESGSSYGQERGQTASLQNLTAAFVGNLQQNYPATVSTVFRTGDKIAANAHMEQASCAQCQSPLDAKLSDTLLANEYSRAVSEAGVGLSKDGDASESLAKQRLEFKDGLCHACRCIQLELGYDTLS.

This sequence belongs to the CTU2/NCS2 family.

It localises to the cytoplasm. It participates in tRNA modification; 5-methoxycarbonylmethyl-2-thiouridine-tRNA biosynthesis. Plays a central role in 2-thiolation of mcm(5)S(2)U at tRNA wobble positions of tRNA(Lys), tRNA(Glu) and tRNA(Gln). May act by forming a heterodimer with NCS6/CTU1 that ligates sulfur from thiocarboxylated URM1 onto the uridine of tRNAs at wobble position. The chain is Cytoplasmic tRNA 2-thiolation protein 2 from Drosophila pseudoobscura pseudoobscura (Fruit fly).